Here is a 209-residue protein sequence, read N- to C-terminus: Orotate phosphoribosyltransferase (209 aa).

5-phospho-alpha-D-ribose 1-diphosphate is bound by residues arginine 96, lysine 100, histidine 102, and 122 to 130; that span reads EDLISTGGS. Serine 126 provides a ligand contact to orotate.

This sequence belongs to the purine/pyrimidine phosphoribosyltransferase family. PyrE subfamily. As to quaternary structure, homodimer. Mg(2+) is required as a cofactor.

The catalysed reaction is orotidine 5'-phosphate + diphosphate = orotate + 5-phospho-alpha-D-ribose 1-diphosphate. The protein operates within pyrimidine metabolism; UMP biosynthesis via de novo pathway; UMP from orotate: step 1/2. Its function is as follows. Catalyzes the transfer of a ribosyl phosphate group from 5-phosphoribose 1-diphosphate to orotate, leading to the formation of orotidine monophosphate (OMP). The sequence is that of Orotate phosphoribosyltransferase from Lactococcus lactis subsp. cremoris (strain SK11).